A 461-amino-acid chain; its full sequence is PTS system sucrose-specific EIIBC component (461 aa).

Residues lysine 4–glutamate 87 form the PTS EIIB type-1 domain. Cysteine 26 functions as the Phosphocysteine intermediate; for EIIB activity in the catalytic mechanism. The PTS EIIC type-1 domain maps to lysine 107–lysine 461. Helical transmembrane passes span isoleucine 112–methionine 132, leucine 148–alanine 168, leucine 178–alanine 198, phenylalanine 208–valine 228, leucine 248–glycine 268, alanine 289–valine 309, leucine 329–phenylalanine 349, isoleucine 359–valine 379, phenylalanine 387–alanine 407, and leucine 430–valine 450.

It is found in the cell membrane. It carries out the reaction N(pros)-phospho-L-histidyl-[protein](out) + sucrose = sucrose 6(G)-phosphate(in) + L-histidyl-[protein]. Its function is as follows. The phosphoenolpyruvate-dependent sugar phosphotransferase system (sugar PTS), a major carbohydrate active transport system, catalyzes the phosphorylation of incoming sugar substrates concomitantly with their translocation across the cell membrane. This system is involved in sucrose transport. The protein is PTS system sucrose-specific EIIBC component (sacP) of Bacillus subtilis (strain 168).